The following is a 375-amino-acid chain: Fructose-1,6-bisphosphate aldolase/phosphatase (375 aa).

The active-site Proton acceptor; for FBP phosphatase activity is the aspartate 15. Positions 15, 22, 56, and 57 each coordinate Mg(2+). Beta-D-fructose 1,6-bisphosphate is bound at residue histidine 22. Histidine 22 is a binding site for dihydroxyacetone phosphate. A beta-D-fructose 1,6-bisphosphate-binding site is contributed by tyrosine 94. Glutamine 98 is a Mg(2+) binding site. Position 107–108 (107–108 (GN)) interacts with beta-D-fructose 1,6-bisphosphate. Residue aspartate 135 participates in Mg(2+) binding. Lysine 136 is a binding site for beta-D-fructose 1,6-bisphosphate. Lysine 136 is a binding site for dihydroxyacetone phosphate. The active-site Proton donor/acceptor; for FBP aldolase activity is tyrosine 237. Mg(2+)-binding residues include lysine 240, aspartate 241, and aspartate 242. Lysine 240 serves as the catalytic Schiff-base intermediate with DHAP; for FBP aldolase activity. Residues 250 to 251 (QS), arginine 274, aspartate 295, and tyrosine 357 each bind beta-D-fructose 1,6-bisphosphate. Residues arginine 274 and aspartate 295 each coordinate dihydroxyacetone phosphate.

It belongs to the FBP aldolase/phosphatase family. In terms of assembly, homooctamer; dimer of tetramers. Mg(2+) serves as cofactor.

The catalysed reaction is beta-D-fructose 1,6-bisphosphate = D-glyceraldehyde 3-phosphate + dihydroxyacetone phosphate. The enzyme catalyses beta-D-fructose 1,6-bisphosphate + H2O = beta-D-fructose 6-phosphate + phosphate. The protein operates within carbohydrate biosynthesis; gluconeogenesis. Its activity is regulated as follows. FBPase activity is inhibited by Ca(2+), ATP, ADP and phosphoenolpyruvate. Functionally, catalyzes two subsequent steps in gluconeogenesis: the aldol condensation of dihydroxyacetone phosphate (DHAP) and glyceraldehyde-3-phosphate (GA3P) to fructose-1,6-bisphosphate (FBP), and the dephosphorylation of FBP to fructose-6-phosphate (F6P). Can also dephosphorylate, with lower activity, other related substrates including fructose-1-phosphate, fructose-6-phosphate, glucose-1-phosphate, glucose-6-phosphate, glycerol-2-phosphate, phosphoenolpyruvate, 5'-AMP, 6'-ADP and 7'-ATP. The chain is Fructose-1,6-bisphosphate aldolase/phosphatase from Thermococcus onnurineus (strain NA1).